A 203-amino-acid polypeptide reads, in one-letter code: Shikimate kinase (203 aa).

32–37 is a binding site for ATP; that stretch reads GAGKTA. Thr36 provides a ligand contact to Mg(2+). Positions 54, 78, and 100 each coordinate substrate. Residue Arg138 coordinates ATP. Arg157 serves as a coordination point for substrate.

The protein belongs to the shikimate kinase family. In terms of assembly, monomer. Mg(2+) serves as cofactor.

The protein resides in the cytoplasm. The enzyme catalyses shikimate + ATP = 3-phosphoshikimate + ADP + H(+). The protein operates within metabolic intermediate biosynthesis; chorismate biosynthesis; chorismate from D-erythrose 4-phosphate and phosphoenolpyruvate: step 5/7. Functionally, catalyzes the specific phosphorylation of the 3-hydroxyl group of shikimic acid using ATP as a cosubstrate. This Mesorhizobium japonicum (strain LMG 29417 / CECT 9101 / MAFF 303099) (Mesorhizobium loti (strain MAFF 303099)) protein is Shikimate kinase.